A 772-amino-acid chain; its full sequence is Delta-like protein A (772 aa).

Residues 1–20 (MGRHLLLLLFSILYMLLCQA) form the signal peptide. Residues 21–536 (SSSGVFELKL…SQIASDVPWT (516 aa)) lie on the Extracellular side of the membrane. The 45-residue stretch at 179 to 223 (FVCDEHYYGEGCSVFCRPRDDAFGHFTCGERGEIICDAGWKGQYC) folds into the DSL domain. Disulfide bonds link Cys-181/Cys-190, Cys-194/Cys-206, Cys-214/Cys-223, Cys-228/Cys-239, Cys-232/Cys-245, Cys-259/Cys-270, Cys-265/Cys-276, Cys-278/Cys-287, Cys-294/Cys-306, Cys-300/Cys-316, Cys-318/Cys-327, Cys-334/Cys-345, Cys-339/Cys-354, Cys-356/Cys-365, Cys-372/Cys-383, Cys-377/Cys-393, Cys-395/Cys-404, Cys-411/Cys-422, Cys-416/Cys-431, Cys-433/Cys-442, Cys-449/Cys-460, Cys-454/Cys-469, Cys-471/Cys-480, Cys-487/Cys-498, Cys-492/Cys-507, and Cys-509/Cys-518. EGF-like domains follow at residues 225-257 (EPIC…RYCD), 257-288 (DECI…LFCN), and 290-328 (DLNY…ASCE). An EGF-like 4; calcium-binding domain is found at 330-366 (EVNECTGNPCRNGGSCTDMENTYSCTCPPGFYGKNCE). 4 consecutive EGF-like domains span residues 368 to 405 (SAMT…FNCE), 407 to 443 (KIDH…MNCD), 445 to 481 (AGDE…RNCS), and 483 to 519 (PVSR…RNCQ). A glycan (N-linked (GlcNAc...) asparagine) is linked at Asn-479. The chain crosses the membrane as a helical span at residues 537 to 557 (AVGSGVLLVLLLVVACAVVVV). Residues 558–772 (CVRSKVQQRR…KDECVIATEV (215 aa)) are Cytoplasmic-facing. The segment at 688–722 (EEKRRKRLKSDASEKSKYSESRYSESKYSESKYSE) is disordered. A compositionally biased stretch (basic and acidic residues) spans 696–722 (KSDASEKSKYSESRYSESKYSESKYSE).

Interacts with mib. Post-translationally, ubiquitinated by mib, leading to its endocytosis and subsequent degradation. Ubiquitinated by the ECS(ASB11) complex, leading to its degradation by the proteasome. As to expression, expressed in nervous system. In the developing nervous system, it is expressed in overlapping regions with deltaB (dlb) and deltaD (dld); in the neural plate, dla is expressed in patches of contiguous cells with dld, while dlb is confined to scattered cells within those patches that will differentiate as neurons. In 24 hours embryos, expressed in the hindbrain in stripes adjacent to rhombomere boundaries, but not in the actual boundary cells. During gastrulation and tail formation, expressed in embryonic midline cells. Expressed in hair cells of inner ear.

It localises to the membrane. Functionally, acts as a ligand for Notch receptors and is involved in primary neurogenesis. Can activate Notch receptors, thereby playing a key role in lateral inhibition, a process that prevents the immediate neighbors of each nascent neural cell from simultaneously embarking on neural differentiation. Required for boundary formation during segmentation of the hindbrain. Required for midline cell fate specification prior to germ layer formation; regulates specification of floorplate, notochord and hypochord. In inner ear, it prevents adjacent cells from adopting the same cell fate. Plays a role in angiogenesis. The sequence is that of Delta-like protein A (dla) from Danio rerio (Zebrafish).